The primary structure comprises 490 residues: ATP synthase subunit beta, chloroplastic (490 aa).

170–177 (GGAGVGKT) lines the ATP pocket.

The protein belongs to the ATPase alpha/beta chains family. F-type ATPases have 2 components, CF(1) - the catalytic core - and CF(0) - the membrane proton channel. CF(1) has five subunits: alpha(3), beta(3), gamma(1), delta(1), epsilon(1). CF(0) has four main subunits: a(1), b(1), b'(1) and c(9-12).

Its subcellular location is the plastid. The protein localises to the chloroplast thylakoid membrane. The catalysed reaction is ATP + H2O + 4 H(+)(in) = ADP + phosphate + 5 H(+)(out). Functionally, produces ATP from ADP in the presence of a proton gradient across the membrane. The catalytic sites are hosted primarily by the beta subunits. The protein is ATP synthase subunit beta, chloroplastic of Cressa truxillensis (Spreading alkaliweed).